Consider the following 90-residue polypeptide: Protein RALF-like 3 (90 aa).

The signal sequence occupies residues methionine 1–alanine 29. 2 cysteine pairs are disulfide-bonded: cysteine 59–cysteine 67 and cysteine 80–cysteine 86.

It belongs to the plant rapid alkalinization factor (RALF) family.

The protein resides in the secreted. Its function is as follows. Cell signaling peptide that may regulate plant stress, growth, and development. Mediates a rapid alkalinization of extracellular space by mediating a transient increase in the cytoplasmic Ca(2+) concentration leading to a calcium-dependent signaling events through a cell surface receptor and a concomitant activation of some intracellular mitogen-activated protein kinases. The protein is Protein RALF-like 3 (RALFL3) of Arabidopsis thaliana (Mouse-ear cress).